Consider the following 201-residue polypeptide: Holliday junction branch migration complex subunit RuvA (201 aa).

A domain I region spans residues 1–63; sequence MIAYIKGTLN…EDAQILFGFQ (63 aa). Residues 64–142 form a domain II region; the sequence is NRDEKYLFTK…SVFSITDEQQ (79 aa). The interval 143-149 is flexible linker; it reads KSSVSNV. Residues 150 to 201 are domain III; that stretch reads NNNEVYSEAMEALKALGYTDKEVKQVLPHLKKDNDALSVDEAIRKALALLAK.

The protein belongs to the RuvA family. Homotetramer. Forms an RuvA(8)-RuvB(12)-Holliday junction (HJ) complex. HJ DNA is sandwiched between 2 RuvA tetramers; dsDNA enters through RuvA and exits via RuvB. An RuvB hexamer assembles on each DNA strand where it exits the tetramer. Each RuvB hexamer is contacted by two RuvA subunits (via domain III) on 2 adjacent RuvB subunits; this complex drives branch migration. In the full resolvosome a probable DNA-RuvA(4)-RuvB(12)-RuvC(2) complex forms which resolves the HJ.

The protein resides in the cytoplasm. In terms of biological role, the RuvA-RuvB-RuvC complex processes Holliday junction (HJ) DNA during genetic recombination and DNA repair, while the RuvA-RuvB complex plays an important role in the rescue of blocked DNA replication forks via replication fork reversal (RFR). RuvA specifically binds to HJ cruciform DNA, conferring on it an open structure. The RuvB hexamer acts as an ATP-dependent pump, pulling dsDNA into and through the RuvAB complex. HJ branch migration allows RuvC to scan DNA until it finds its consensus sequence, where it cleaves and resolves the cruciform DNA. The chain is Holliday junction branch migration complex subunit RuvA from Oceanobacillus iheyensis (strain DSM 14371 / CIP 107618 / JCM 11309 / KCTC 3954 / HTE831).